Reading from the N-terminus, the 109-residue chain is UPF0122 protein CLH_1195 (109 aa).

It belongs to the UPF0122 family.

Functionally, might take part in the signal recognition particle (SRP) pathway. This is inferred from the conservation of its genetic proximity to ftsY/ffh. May be a regulatory protein. In Clostridium botulinum (strain Alaska E43 / Type E3), this protein is UPF0122 protein CLH_1195.